The chain runs to 305 residues: Heme A synthase (305 aa).

The Cytoplasmic segment spans residues 1–6 (MKKFLK). Residues 7–27 (VWSVLTIICMTVVVFGGALVT) form a helical membrane-spanning segment. The Extracellular portion of the chain corresponds to 28–63 (KTGSADGCGNSWPLCNGQLVRLTDVTPEKLIEFMHR). C35 and C42 are disulfide-bonded. Residue E59 is part of the active site. Heme o is bound at residue H62. The helical transmembrane segment at 64 to 84 (MTTGISSIFVIVLAICAWIYM) threads the bilayer. The Cytoplasmic portion of the chain corresponds to 85–92 (KNRRETKP). The helical transmembrane segment at 93–113 (LAIIAVLFLIIQALMGMAAVV) threads the bilayer. Over 114-122 (WGQNPYIMA) the chain is Extracellular. A helical membrane pass occupies residues 123 to 143 (LHFGISIICYASIVLLALMIF). H124 provides a ligand contact to heme o. The Cytoplasmic portion of the chain corresponds to 144 to 160 (EVDRKFDARNLVMGTKL). Residues 161–181 (RINIYALTIYTYLAVYTGALV) form a helical membrane-spanning segment. At 182–212 (RHEKASMAVPVWPFENGHFIMPTSVQDYVQY) the chain is on the extracellular side. A helical membrane pass occupies residues 213-233 (FHRLAAFILIVWLLYVTWLVF). H214 contacts heme b. At 234–240 (RDYRRYR) the chain is on the cytoplasmic side. The chain crosses the membrane as a helical span at residues 241–261 (VLTFSMVLSLVFIALQAVTGA). Topologically, residues 262-271 (LSVYTGVNLY) are extracellular. The helical transmembrane segment at 272–292 (IALAHSLIITMLFALLCYLCL) threads the bilayer. H276 is a binding site for heme b. Residues 293 to 305 (LASRSKSNRLRIK) lie on the Cytoplasmic side of the membrane.

Belongs to the COX15/CtaA family. Type 1 subfamily. Interacts with CtaB. Heme b serves as cofactor.

Its subcellular location is the cell membrane. The enzyme catalyses Fe(II)-heme o + 2 A + H2O = Fe(II)-heme a + 2 AH2. The protein operates within porphyrin-containing compound metabolism; heme A biosynthesis; heme A from heme O: step 1/1. Catalyzes the conversion of heme O to heme A by two successive hydroxylations of the methyl group at C8. The first hydroxylation forms heme I, the second hydroxylation results in an unstable dihydroxymethyl group, which spontaneously dehydrates, resulting in the formyl group of heme A. The chain is Heme A synthase from Listeria monocytogenes serotype 4b (strain F2365).